A 509-amino-acid polypeptide reads, in one-letter code: 3-octaprenyl-4-hydroxybenzoate carboxy-lyase (509 aa).

Asn179 provides a ligand contact to Mn(2+). Prenylated FMN is bound by residues 182–184 (IYR), 196–198 (RWL), and 201–202 (RG). Glu245 serves as a coordination point for Mn(2+). Asp304 (proton donor) is an active-site residue.

It belongs to the UbiD family. In terms of assembly, homohexamer. It depends on prenylated FMN as a cofactor. Mn(2+) is required as a cofactor.

The protein resides in the cell membrane. It carries out the reaction a 4-hydroxy-3-(all-trans-polyprenyl)benzoate + H(+) = a 2-(all-trans-polyprenyl)phenol + CO2. The protein operates within cofactor biosynthesis; ubiquinone biosynthesis. Functionally, catalyzes the decarboxylation of 3-octaprenyl-4-hydroxy benzoate to 2-octaprenylphenol, an intermediate step in ubiquinone biosynthesis. The protein is 3-octaprenyl-4-hydroxybenzoate carboxy-lyase of Cupriavidus pinatubonensis (strain JMP 134 / LMG 1197) (Cupriavidus necator (strain JMP 134)).